The primary structure comprises 379 residues: Succinyl-diaminopimelate desuccinylase (379 aa).

His-68 contributes to the Zn(2+) binding site. Asp-70 is a catalytic residue. Asp-101 contacts Zn(2+). Residue Glu-135 is the Proton acceptor of the active site. The Zn(2+) site is built by Glu-136, Glu-164, and His-350.

It belongs to the peptidase M20A family. DapE subfamily. As to quaternary structure, homodimer. The cofactor is Zn(2+). Co(2+) serves as cofactor.

The enzyme catalyses N-succinyl-(2S,6S)-2,6-diaminopimelate + H2O = (2S,6S)-2,6-diaminopimelate + succinate. The protein operates within amino-acid biosynthesis; L-lysine biosynthesis via DAP pathway; LL-2,6-diaminopimelate from (S)-tetrahydrodipicolinate (succinylase route): step 3/3. Functionally, catalyzes the hydrolysis of N-succinyl-L,L-diaminopimelic acid (SDAP), forming succinate and LL-2,6-diaminopimelate (DAP), an intermediate involved in the bacterial biosynthesis of lysine and meso-diaminopimelic acid, an essential component of bacterial cell walls. This chain is Succinyl-diaminopimelate desuccinylase, found in Bordetella parapertussis (strain 12822 / ATCC BAA-587 / NCTC 13253).